Reading from the N-terminus, the 576-residue chain is Sulfite reductase [NADPH] hemoprotein beta-component (576 aa).

Positions 434, 440, 479, and 483 each coordinate [4Fe-4S] cluster. A siroheme-binding site is contributed by Cys-483.

Belongs to the nitrite and sulfite reductase 4Fe-4S domain family. In terms of assembly, alpha(8)-beta(8). The alpha component is a flavoprotein, the beta component is a hemoprotein. Siroheme serves as cofactor. [4Fe-4S] cluster is required as a cofactor.

The enzyme catalyses hydrogen sulfide + 3 NADP(+) + 3 H2O = sulfite + 3 NADPH + 4 H(+). Its pathway is sulfur metabolism; hydrogen sulfide biosynthesis; hydrogen sulfide from sulfite (NADPH route): step 1/1. Its function is as follows. Component of the sulfite reductase complex that catalyzes the 6-electron reduction of sulfite to sulfide. This is one of several activities required for the biosynthesis of L-cysteine from sulfate. This is Sulfite reductase [NADPH] hemoprotein beta-component from Oceanobacillus iheyensis (strain DSM 14371 / CIP 107618 / JCM 11309 / KCTC 3954 / HTE831).